A 136-amino-acid polypeptide reads, in one-letter code: Aspartate 1-decarboxylase (136 aa).

Serine 25 functions as the Schiff-base intermediate with substrate; via pyruvic acid in the catalytic mechanism. Position 25 is a pyruvic acid (Ser) (serine 25). Threonine 57 is a binding site for substrate. Residue tyrosine 58 is the Proton donor of the active site. 73–75 (GAA) lines the substrate pocket.

Belongs to the PanD family. Heterooctamer of four alpha and four beta subunits. Pyruvate is required as a cofactor. Is synthesized initially as an inactive proenzyme, which is activated by self-cleavage at a specific serine bond to produce a beta-subunit with a hydroxyl group at its C-terminus and an alpha-subunit with a pyruvoyl group at its N-terminus.

Its subcellular location is the cytoplasm. The catalysed reaction is L-aspartate + H(+) = beta-alanine + CO2. The protein operates within cofactor biosynthesis; (R)-pantothenate biosynthesis; beta-alanine from L-aspartate: step 1/1. Its function is as follows. Catalyzes the pyruvoyl-dependent decarboxylation of aspartate to produce beta-alanine. The protein is Aspartate 1-decarboxylase of Acidothermus cellulolyticus (strain ATCC 43068 / DSM 8971 / 11B).